The following is a 65-amino-acid chain: Large ribosomal subunit protein bL35 (65 aa).

Positions methionine 1 to alanine 10 are enriched in basic residues. Positions methionine 1–threonine 21 are disordered.

This sequence belongs to the bacterial ribosomal protein bL35 family.

In Polynucleobacter necessarius subsp. necessarius (strain STIR1), this protein is Large ribosomal subunit protein bL35.